The chain runs to 209 residues: N-(5'-phosphoribosyl)anthranilate isomerase (209 aa).

It belongs to the TrpF family.

It catalyses the reaction N-(5-phospho-beta-D-ribosyl)anthranilate = 1-(2-carboxyphenylamino)-1-deoxy-D-ribulose 5-phosphate. Its pathway is amino-acid biosynthesis; L-tryptophan biosynthesis; L-tryptophan from chorismate: step 3/5. This is N-(5'-phosphoribosyl)anthranilate isomerase from Pyrobaculum islandicum (strain DSM 4184 / JCM 9189 / GEO3).